Consider the following 278-residue polypeptide: Inosose isomerase (278 aa).

Residues Glu-142, Asp-174, His-200, and Glu-246 each coordinate a divalent metal cation.

This sequence belongs to the IolI family. The cofactor is a divalent metal cation.

The catalysed reaction is scyllo-inosose = scyllo-inosine. It functions in the pathway polyol metabolism; myo-inositol degradation into acetyl-CoA. In terms of biological role, involved in the reversible interconverion of 2-keto-myo-inositol (2KMI, inosose or 2,4,6/3,5-pentahydroxycyclohexanone) to 1-keto-D-chiro-inositol (1KDCI or 2,3,5/4,6-pentahydroxycyclohexanone). This chain is Inosose isomerase (iolI), found in Bacillus licheniformis (strain ATCC 14580 / DSM 13 / JCM 2505 / CCUG 7422 / NBRC 12200 / NCIMB 9375 / NCTC 10341 / NRRL NRS-1264 / Gibson 46).